Reading from the N-terminus, the 115-residue chain is Large ribosomal subunit protein bL19 (115 aa).

The protein belongs to the bacterial ribosomal protein bL19 family.

Functionally, this protein is located at the 30S-50S ribosomal subunit interface and may play a role in the structure and function of the aminoacyl-tRNA binding site. This is Large ribosomal subunit protein bL19 from Lactobacillus acidophilus (strain ATCC 700396 / NCK56 / N2 / NCFM).